An 86-amino-acid chain; its full sequence is YcgL domain-containing protein XC_4086 (86 aa).

Positions 1–83 (MHAYVYKSQR…PKTVVLAGEC (83 aa)) constitute a YcgL domain.

The sequence is that of YcgL domain-containing protein XC_4086 from Xanthomonas campestris pv. campestris (strain 8004).